Here is an 826-residue protein sequence, read N- to C-terminus: Zinc phosphodiesterase ELAC protein 2 (826 aa).

Residues 1 to 16 (MWALCSLLRSAAGRTM) constitute a mitochondrion transit peptide. Disordered stretches follow at residues 16–51 (MSQG…PSGC) and 188–231 (EQRR…VSQR). Basic and acidic residues predominate over residues 27–38 (ARRERPRKDPLR). Ser-199, Ser-208, Ser-212, Ser-229, Ser-618, and Ser-736 each carry phosphoserine. Positions 208–224 (SPERSSDSESNENEPHL) are enriched in basic and acidic residues. Positions 798–826 (ELAGGLEDGEPQQKRAHTEEPQAKKVRAQ) are disordered. Basic and acidic residues predominate over residues 808-820 (PQQKRAHTEEPQA).

This sequence belongs to the RNase Z family. Homodimer. Interacts with PTCD1. Zn(2+) is required as a cofactor. As to expression, widely expressed. Highly expressed in heart, placenta, liver, skeletal muscle, kidney, pancreas, testis and ovary. Weakly expressed in brain, lung, spleen, thymus, prostate, small intestine, colon and leukocytes.

It is found in the mitochondrion. It localises to the mitochondrion matrix. The protein localises to the mitochondrion nucleoid. Its subcellular location is the nucleus. It carries out the reaction Endonucleolytic cleavage of RNA, removing extra 3' nucleotides from tRNA precursor, generating 3' termini of tRNAs. A 3'-hydroxy group is left at the tRNA terminus and a 5'-phosphoryl group is left at the trailer molecule.. In terms of biological role, zinc phosphodiesterase, which displays mitochondrial tRNA 3'-processing endonuclease activity. Involved in tRNA maturation, by removing a 3'-trailer from precursor tRNA. Associates with mitochondrial DNA complexes at the nucleoids to initiate RNA processing and ribosome assembly. In Homo sapiens (Human), this protein is Zinc phosphodiesterase ELAC protein 2 (ELAC2).